The sequence spans 406 residues: S-adenosylmethionine synthase (406 aa).

An ATP-binding site is contributed by histidine 16. Aspartate 18 contributes to the Mg(2+) binding site. Glutamate 44 is a binding site for K(+). Positions 57 and 100 each coordinate L-methionine. The tract at residues 100–110 (QSVDIAQGVDR) is flexible loop. ATP contacts are provided by residues 165 to 167 (DAK), aspartate 241, 247 to 248 (RK), alanine 264, and lysine 268. Aspartate 241 provides a ligand contact to L-methionine. Lysine 272 lines the L-methionine pocket.

It belongs to the AdoMet synthase family. As to quaternary structure, homotetramer; dimer of dimers. Mg(2+) is required as a cofactor. K(+) serves as cofactor.

It is found in the cytoplasm. The enzyme catalyses L-methionine + ATP + H2O = S-adenosyl-L-methionine + phosphate + diphosphate. It participates in amino-acid biosynthesis; S-adenosyl-L-methionine biosynthesis; S-adenosyl-L-methionine from L-methionine: step 1/1. Its function is as follows. Catalyzes the formation of S-adenosylmethionine (AdoMet) from methionine and ATP. The overall synthetic reaction is composed of two sequential steps, AdoMet formation and the subsequent tripolyphosphate hydrolysis which occurs prior to release of AdoMet from the enzyme. This chain is S-adenosylmethionine synthase, found in Chromohalobacter salexigens (strain ATCC BAA-138 / DSM 3043 / CIP 106854 / NCIMB 13768 / 1H11).